We begin with the raw amino-acid sequence, 248 residues long: 5'-nucleotidase SurE (248 aa).

A divalent metal cation-binding residues include D8, D9, S39, and N91.

Belongs to the SurE nucleotidase family. Requires a divalent metal cation as cofactor.

The protein localises to the cytoplasm. The enzyme catalyses a ribonucleoside 5'-phosphate + H2O = a ribonucleoside + phosphate. Functionally, nucleotidase that shows phosphatase activity on nucleoside 5'-monophosphates. The polypeptide is 5'-nucleotidase SurE (Neisseria meningitidis serogroup C (strain 053442)).